The following is a 123-amino-acid chain: MARIAGIDLPKEKRVEIGLTYIYGIGLTSSRKIIKATSVNPETRVKDLTEEEVNALRDYINKNFKIEGDLRREVALNIKRLVEIGCYRGIRHRRGLPVRGQKTKTNARTRKGPKKAVASKKKK.

The segment at 95 to 123 (GLPVRGQKTKTNARTRKGPKKAVASKKKK) is disordered.

Belongs to the universal ribosomal protein uS13 family. In terms of assembly, part of the 30S ribosomal subunit. Forms a loose heterodimer with protein S19. Forms two bridges to the 50S subunit in the 70S ribosome.

Its function is as follows. Located at the top of the head of the 30S subunit, it contacts several helices of the 16S rRNA. In the 70S ribosome it contacts the 23S rRNA (bridge B1a) and protein L5 of the 50S subunit (bridge B1b), connecting the 2 subunits; these bridges are implicated in subunit movement. Contacts the tRNAs in the A and P-sites. This chain is Small ribosomal subunit protein uS13, found in Clostridium acetobutylicum (strain ATCC 824 / DSM 792 / JCM 1419 / IAM 19013 / LMG 5710 / NBRC 13948 / NRRL B-527 / VKM B-1787 / 2291 / W).